Reading from the N-terminus, the 179-residue chain is Large ribosomal subunit protein uL5 (179 aa).

This sequence belongs to the universal ribosomal protein uL5 family. As to quaternary structure, part of the 50S ribosomal subunit; part of the 5S rRNA/L5/L18/L25 subcomplex. Contacts the 5S rRNA and the P site tRNA. Forms a bridge to the 30S subunit in the 70S ribosome.

In terms of biological role, this is one of the proteins that bind and probably mediate the attachment of the 5S RNA into the large ribosomal subunit, where it forms part of the central protuberance. In the 70S ribosome it contacts protein S13 of the 30S subunit (bridge B1b), connecting the 2 subunits; this bridge is implicated in subunit movement. Contacts the P site tRNA; the 5S rRNA and some of its associated proteins might help stabilize positioning of ribosome-bound tRNAs. The chain is Large ribosomal subunit protein uL5 from Lysinibacillus sphaericus (strain C3-41).